The primary structure comprises 242 residues: ATP-dependent dethiobiotin synthetase BioD (242 aa).

Residue 12-17 (EVGKTV) participates in ATP binding. Thr-16 is a Mg(2+) binding site. Lys-37 is a catalytic residue. Position 41 (Ser-41) interacts with substrate. Residues Asp-51 and 112 to 115 (EGAG) contribute to the ATP site. Mg(2+)-binding residues include Asp-51 and Glu-112.

The protein belongs to the dethiobiotin synthetase family. As to quaternary structure, homodimer. The cofactor is Mg(2+).

Its subcellular location is the cytoplasm. It catalyses the reaction (7R,8S)-7,8-diammoniononanoate + CO2 + ATP = (4R,5S)-dethiobiotin + ADP + phosphate + 3 H(+). The protein operates within cofactor biosynthesis; biotin biosynthesis; biotin from 7,8-diaminononanoate: step 1/2. Functionally, catalyzes a mechanistically unusual reaction, the ATP-dependent insertion of CO2 between the N7 and N8 nitrogen atoms of 7,8-diaminopelargonic acid (DAPA, also called 7,8-diammoniononanoate) to form a ureido ring. This Bacillus anthracis (strain A0248) protein is ATP-dependent dethiobiotin synthetase BioD.